Here is a 274-residue protein sequence, read N- to C-terminus: Rhamnulose-1-phosphate aldolase (274 aa).

The active site involves Glu117. Zn(2+) contacts are provided by His141, His143, and His212.

This sequence belongs to the aldolase class II family. RhaD subfamily. As to quaternary structure, homotetramer. The cofactor is Zn(2+).

The protein localises to the cytoplasm. It catalyses the reaction L-rhamnulose 1-phosphate = (S)-lactaldehyde + dihydroxyacetone phosphate. Its pathway is carbohydrate degradation; L-rhamnose degradation; glycerone phosphate from L-rhamnose: step 3/3. In terms of biological role, catalyzes the reversible cleavage of L-rhamnulose-1-phosphate to dihydroxyacetone phosphate (DHAP) and L-lactaldehyde. This is Rhamnulose-1-phosphate aldolase from Pectobacterium atrosepticum (strain SCRI 1043 / ATCC BAA-672) (Erwinia carotovora subsp. atroseptica).